The following is a 167-amino-acid chain: Protein-export protein SecB (167 aa).

The protein belongs to the SecB family. As to quaternary structure, homotetramer, a dimer of dimers. One homotetramer interacts with 1 SecA dimer.

It is found in the cytoplasm. In terms of biological role, one of the proteins required for the normal export of preproteins out of the cell cytoplasm. It is a molecular chaperone that binds to a subset of precursor proteins, maintaining them in a translocation-competent state. It also specifically binds to its receptor SecA. The chain is Protein-export protein SecB from Wolbachia pipientis subsp. Culex pipiens (strain wPip).